We begin with the raw amino-acid sequence, 397 residues long: E3 ubiquitin-protein ligase RNF149 (397 aa).

Residues 1–20 form the signal peptide; that stretch reads MLRWLCLYSALCALTHGSSA. Over residues 39 to 49 the composition is skewed to polar residues; it reads TNSSVTGSTES. The interval 39-60 is disordered; sequence TNSSVTGSTESGRYGDSSPKES. 2 N-linked (GlcNAc...) asparagine glycosylation sites follow: Asn-40 and Asn-140. Positions 83-170 constitute a PA domain; the sequence is YIVPGTSAAA…PKGMEIMEPL (88 aa). The chain crosses the membrane as a helical span at residues 196–216; sequence VVFVAIAFITMMIISLAWLIF. Asn-231 carries an N-linked (GlcNAc...) asparagine glycan. The RING-type; atypical zinc finger occupies 264–305; it reads CAVCIENYKTKDLVRILPCKHIFHRLCIDPWLIEHRTCPMCK. The segment at 341–397 is disordered; the sequence is SITQEESRSEGNNLPSSSTGSSLQQSNSVKDDAGETTALLDDPGNDNAAATHTQDSH. Over residues 351-368 the composition is skewed to low complexity; that stretch reads GNNLPSSSTGSSLQQSNS. A compositionally biased stretch (polar residues) spans 388–397; sequence AAATHTQDSH.

It is found in the membrane. The enzyme catalyses S-ubiquitinyl-[E2 ubiquitin-conjugating enzyme]-L-cysteine + [acceptor protein]-L-lysine = [E2 ubiquitin-conjugating enzyme]-L-cysteine + N(6)-ubiquitinyl-[acceptor protein]-L-lysine.. It functions in the pathway protein modification; protein ubiquitination. In terms of biological role, E3 ubiquitin-protein ligase. Ubiquitinates BRAF, inducing its proteasomal degradation. The sequence is that of E3 ubiquitin-protein ligase RNF149 (rnf149) from Xenopus laevis (African clawed frog).